The sequence spans 631 residues: Probable potassium transport system protein Kup (631 aa).

Transmembrane regions (helical) follow at residues 17–37 (IGLLIAAVGVVYGDIGTSPLY), 56–76 (ILGVLSLIFWSLIWVVSFKYM), 109–129 (MMMVVFGLFGAALFYGDSMIT), 147–167 (GLDHWIVPMALVVLVGLFLIQ), 174–194 (IGVLFGPVMVVWFLVLGALGV), 215–235 (FFIIHPGIGVAILGAVVLALT), 256–276 (WFILVLPALLLNYFGQGALVL), 288–308 (LLAPSWALLPLIGLSTMATII), 346–366 (IYIGAVNWALMVGVIMLVIGF), 378–398 (VAVTGTMLCTTILVSTVMLML), 403–423 (PLLAVPLLICLLLVDGLFFAA), and 428–448 (IFQGGAFPVLAGAVLFILMTT).

Belongs to the HAK/KUP transporter (TC 2.A.72) family.

It is found in the cell inner membrane. The enzyme catalyses K(+)(in) + H(+)(in) = K(+)(out) + H(+)(out). Its function is as follows. Transport of potassium into the cell. Likely operates as a K(+):H(+) symporter. The chain is Probable potassium transport system protein Kup from Pseudomonas syringae pv. tomato (strain ATCC BAA-871 / DC3000).